A 528-amino-acid polypeptide reads, in one-letter code: DEAD-box ATP-dependent RNA helicase CshA (528 aa).

The Q motif signature appears at 2–30; the sequence is TTFRELGLSDSLLQSVESMGFEEATPIQA. A Helicase ATP-binding domain is found at 33–203; that stretch reads IPHALQGKDI…ERFMTEPQHI (171 aa). An ATP-binding site is contributed by 46–53; the sequence is AQTGTGKT. The DEAD box motif lies at 151–154; that stretch reads DEAD. Positions 214–374 constitute a Helicase C-terminal domain; it reads NIQQFYLEVQ…RMDAPTLDEA (161 aa). The tract at residues 428 to 528 is disordered; it reads TTPIALTSEP…RKHHSRKPQA (101 aa). Positions 458–506 are enriched in basic and acidic residues; sequence DGNRNRSRDGRGGDGRNRDRNRDGRNRDGNRDRNREGSRDGNRGRRGEG. A compositionally biased stretch (basic residues) spans 518–528; it reads ERKHHSRKPQA.

This sequence belongs to the DEAD box helicase family. CshA subfamily. In terms of assembly, oligomerizes, may be a member of the RNA degradosome.

Its subcellular location is the cytoplasm. The catalysed reaction is ATP + H2O = ADP + phosphate + H(+). In terms of biological role, DEAD-box RNA helicase possibly involved in RNA degradation. Unwinds dsRNA in both 5'- and 3'-directions, has RNA-dependent ATPase activity. This is DEAD-box ATP-dependent RNA helicase CshA from Bacillus thuringiensis (strain Al Hakam).